A 505-amino-acid polypeptide reads, in one-letter code: Glutamate--cysteine ligase (505 aa).

It belongs to the glutamate--cysteine ligase type 1 family. Type 1 subfamily.

The enzyme catalyses L-cysteine + L-glutamate + ATP = gamma-L-glutamyl-L-cysteine + ADP + phosphate + H(+). Its pathway is sulfur metabolism; glutathione biosynthesis; glutathione from L-cysteine and L-glutamate: step 1/2. This is Glutamate--cysteine ligase from Wigglesworthia glossinidia brevipalpis.